A 133-amino-acid polypeptide reads, in one-letter code: Holo-[acyl-carrier-protein] synthase (133 aa).

Residues Asp-8 and Glu-57 each contribute to the Mg(2+) site.

The protein belongs to the P-Pant transferase superfamily. AcpS family. Mg(2+) is required as a cofactor.

The protein localises to the cytoplasm. The enzyme catalyses apo-[ACP] + CoA = holo-[ACP] + adenosine 3',5'-bisphosphate + H(+). Transfers the 4'-phosphopantetheine moiety from coenzyme A to a Ser of acyl-carrier-protein. This is Holo-[acyl-carrier-protein] synthase from Caulobacter vibrioides (strain ATCC 19089 / CIP 103742 / CB 15) (Caulobacter crescentus).